The following is an 800-amino-acid chain: Nucleolar complex protein 3 homolog (800 aa).

2 disordered regions span residues 27 to 93 (KLKN…DMMD) and 160 to 187 (GIIP…RELE). Over residues 40 to 51 (KKYRKEQRKLRQ) the composition is skewed to basic residues. The span at 66 to 78 (NPKEKRPGKRIER) shows a compositional bias: basic and acidic residues. Acidic residues predominate over residues 79–93 (EEEEEEEALPLDMMD). Basic and acidic residues predominate over residues 160 to 174 (GIIPQTREKPVTDSN). Residues 175 to 187 (KDEEDQEEERELE) show a composition bias toward acidic residues. Lys-333 is covalently cross-linked (Glycyl lysine isopeptide (Lys-Gly) (interchain with G-Cter in SUMO2)). Positions 451 to 490 (KEKRKSLSRMQRKWKKAEEKLERELREAEASESTEKKLKL) form a coiled coil. The residue at position 787 (Ser-787) is a Phosphoserine.

It belongs to the CBF/MAK21 family. In terms of tissue distribution, expressed in colon, heart, kidney, liver, lung, placenta, skeletal muscle, small intestine, spleen and thymus.

It is found in the nucleus. The protein localises to the nucleolus. The protein resides in the nucleus speckle. Functionally, may be required for adipogenesis. This Homo sapiens (Human) protein is Nucleolar complex protein 3 homolog (NOC3L).